We begin with the raw amino-acid sequence, 540 residues long: Glucose-6-phosphate isomerase (540 aa).

E350 functions as the Proton donor in the catalytic mechanism. Catalysis depends on residues H381 and K503.

The protein belongs to the GPI family.

It localises to the cytoplasm. The enzyme catalyses alpha-D-glucose 6-phosphate = beta-D-fructose 6-phosphate. The protein operates within carbohydrate biosynthesis; gluconeogenesis. It functions in the pathway carbohydrate degradation; glycolysis; D-glyceraldehyde 3-phosphate and glycerone phosphate from D-glucose: step 2/4. Functionally, catalyzes the reversible isomerization of glucose-6-phosphate to fructose-6-phosphate. The polypeptide is Glucose-6-phosphate isomerase (Paraburkholderia phymatum (strain DSM 17167 / CIP 108236 / LMG 21445 / STM815) (Burkholderia phymatum)).